Reading from the N-terminus, the 208-residue chain is Riboflavin synthase (208 aa).

2 Lumazine-binding repeats span residues Met1–His97 and Ile98–Thr195. 2,4-dihydroxypteridine is bound by residues Gly4–Val6, Cys48–Thr50, Asp62–Thr67, Gly101–Ile103, Lys137, Ser146–Thr148, and Ser160–Thr165.

In terms of assembly, homotrimer.

It catalyses the reaction 2 6,7-dimethyl-8-(1-D-ribityl)lumazine + H(+) = 5-amino-6-(D-ribitylamino)uracil + riboflavin. The protein operates within cofactor biosynthesis; riboflavin biosynthesis; riboflavin from 2-hydroxy-3-oxobutyl phosphate and 5-amino-6-(D-ribitylamino)uracil: step 2/2. Catalyzes the dismutation of two molecules of 6,7-dimethyl-8-ribityllumazine, resulting in the formation of riboflavin and 5-amino-6-(D-ribitylamino)uracil. In Buchnera aphidicola subsp. Schizaphis graminum (strain Sg), this protein is Riboflavin synthase (ribE).